We begin with the raw amino-acid sequence, 296 residues long: Ribosomal RNA small subunit methyltransferase A (296 aa).

S-adenosyl-L-methionine-binding residues include N28, L30, G55, E77, D103, and N122.

The protein belongs to the class I-like SAM-binding methyltransferase superfamily. rRNA adenine N(6)-methyltransferase family. RsmA subfamily.

The protein localises to the cytoplasm. The enzyme catalyses adenosine(1518)/adenosine(1519) in 16S rRNA + 4 S-adenosyl-L-methionine = N(6)-dimethyladenosine(1518)/N(6)-dimethyladenosine(1519) in 16S rRNA + 4 S-adenosyl-L-homocysteine + 4 H(+). Functionally, specifically dimethylates two adjacent adenosines (A1518 and A1519) in the loop of a conserved hairpin near the 3'-end of 16S rRNA in the 30S particle. May play a critical role in biogenesis of 30S subunits. The protein is Ribosomal RNA small subunit methyltransferase A of Sinorhizobium fredii (strain NBRC 101917 / NGR234).